The primary structure comprises 146 residues: Large ribosomal subunit protein uL15 (146 aa).

The tract at residues 1–55 (MGLRLNELSPGVGAKKTAQRRGRGIGSGLGKTGGRGVKGQKSRSGSSIRSGFEGG) is disordered. The span at 24–37 (GIGSGLGKTGGRGV) shows a compositional bias: gly residues.

This sequence belongs to the universal ribosomal protein uL15 family. Part of the 50S ribosomal subunit.

Functionally, binds to the 23S rRNA. This is Large ribosomal subunit protein uL15 from Psychrobacter cryohalolentis (strain ATCC BAA-1226 / DSM 17306 / VKM B-2378 / K5).